A 552-amino-acid polypeptide reads, in one-letter code: Hydroxylamine reductase (552 aa).

The [2Fe-2S] cluster site is built by Cys-3, Cys-6, Cys-18, and Cys-25. Residues His-250, Glu-274, Cys-318, Cys-406, Cys-434, Cys-459, Glu-493, and Lys-495 each contribute to the hybrid [4Fe-2O-2S] cluster site. The residue at position 406 (Cys-406) is a Cysteine persulfide.

It belongs to the HCP family. The cofactor is [2Fe-2S] cluster. Hybrid [4Fe-2O-2S] cluster is required as a cofactor.

It is found in the cytoplasm. The catalysed reaction is A + NH4(+) + H2O = hydroxylamine + AH2 + H(+). Its function is as follows. Catalyzes the reduction of hydroxylamine to form NH(3) and H(2)O. The chain is Hydroxylamine reductase from Shewanella woodyi (strain ATCC 51908 / MS32).